The chain runs to 215 residues: Ras-related protein Rab-5A (215 aa).

GTP-binding residues include Ser-29, Ala-30, Gly-32, Lys-33, Ser-34, Ser-35, His-46, Glu-47, Thr-52, and Gly-78. Position 34 (Ser-34) interacts with Mg(2+). 2 short sequence motifs (switch) span residues 44-56 and 77-93; these read QFHEFQESTIGAA and AGQERYHSLAPMYYRGA. Thr-52 is a binding site for Mg(2+). The residue at position 84 (Ser-84) is a Phosphoserine. GTP-binding residues include Asn-133, Lys-134, Asp-136, Ala-164, and Lys-165. The tract at residues 181 to 215 is disordered; sequence LPKNEPQNPGANSARGRGVDLTEPAQPARSQCCSN. Residues Cys-212 and Cys-213 are each lipidated (S-geranylgeranyl cysteine).

Belongs to the small GTPase superfamily. Rab family. Interacts with GDI1; this promotes dissociation from membranes; phosphorylation at Ser-84 disrupts this interaction. Interacts with GDI2; phosphorylation at Ser-84 disrupts the interaction. Interacts with EEA1. Interacts with RIN1 and GAPVD1, which regulate its pathway, probably by acting as a GEF. Interacts with RINL. Interacts with ALS2CL, SUN2, ZFYVE20 and RUFY1. Interacts with RABEP1; one RABEP1 homodimer binds two RAB5A chains, but at opposite sides of the dimer. Interacts with SGSM1 and SGSM3. Interacts with PIK3CB. Interacts with OCRL and INPP5F. May be a component of a complex composed of RAB5A, DYN2 and PIK3C3. Does not interact with BLOC-3 complex (heterodimer of HPS1 and HPS4). Interacts with CLN5. Interacts with APPL2. Interacts with F8A1/F8A2/F8A3. Found in a complex with F8A1/F8A2/F8A3, HTT and RAB5A; mediates the recruitment of HTT by RAB5A onto early endosomes. Interacts with ATP9A. Interacts with PPP1R21; mediates the recruitment of FERRY complex by RAB5A onto early endosomes. Mg(2+) serves as cofactor. Phosphorylation of Ser-84 in the switch II region by LRRK2 prevents the association of RAB regulatory proteins, including RAB GDP dissociation inhibitors GDI1 and GDI2.

It is found in the cell membrane. The protein resides in the early endosome membrane. The protein localises to the melanosome. It localises to the cytoplasmic vesicle. Its subcellular location is the cell projection. It is found in the ruffle. The protein resides in the membrane. The protein localises to the cytoplasm. It localises to the cytosol. Its subcellular location is the phagosome membrane. It is found in the endosome membrane. The enzyme catalyses GTP + H2O = GDP + phosphate + H(+). With respect to regulation, regulated by guanine nucleotide exchange factors (GEFs) including RINL, which promote the exchange of bound GDP for free GTP. Regulated by GTPase activating proteins (GAPs) which increase the GTP hydrolysis activity. Inhibited by GDP dissociation inhibitors (GDIs). Its function is as follows. The small GTPases Rab are key regulators of intracellular membrane trafficking, from the formation of transport vesicles to their fusion with membranes. Rabs cycle between an inactive GDP-bound form and an active GTP-bound form that is able to recruit to membranes different sets of downstream effectors directly responsible for vesicle formation, movement, tethering and fusion. RAB5A is required for the fusion of plasma membranes and early endosomes. Contributes to the regulation of filopodia extension. Required for the exosomal release of SDCBP, CD63, PDCD6IP and syndecan. Regulates maturation of apoptotic cell-containing phagosomes, probably downstream of DYN2 and PIK3C3. The sequence is that of Ras-related protein Rab-5A from Mus musculus (Mouse).